The following is a 149-amino-acid chain: Arginine repressor (149 aa).

Belongs to the ArgR family.

It is found in the cytoplasm. Its pathway is amino-acid biosynthesis; L-arginine biosynthesis [regulation]. Its function is as follows. Regulates arginine biosynthesis genes. The sequence is that of Arginine repressor from Geobacillus kaustophilus (strain HTA426).